A 414-amino-acid chain; its full sequence is uncharacterized protein (414 aa).

Positions 87 to 117 (KTNDDNKTNGRETHLRPSPSKPEYTGRPTQN) are disordered. The segment covering 88 to 101 (TNDDNKTNGRETHL) has biased composition (basic and acidic residues). The stretch at 243–405 (SMLQSSIDKL…RNKLEMEVER (163 aa)) forms a coiled coil.

This is an uncharacterized protein from Encephalitozoon cuniculi (strain GB-M1) (Microsporidian parasite).